The following is a 249-amino-acid chain: Uridylate kinase (249 aa).

13–16 is an ATP binding site; sequence KLSG. Glycine 55 provides a ligand contact to UMP. 2 residues coordinate ATP: glycine 56 and arginine 60. Residues aspartate 75 and 136–143 each bind UMP; that span reads IGNPFFTT. Residues threonine 163, phenylalanine 169, and aspartate 172 each coordinate ATP.

This sequence belongs to the UMP kinase family. Homohexamer.

The protein resides in the cytoplasm. The enzyme catalyses UMP + ATP = UDP + ADP. It functions in the pathway pyrimidine metabolism; CTP biosynthesis via de novo pathway; UDP from UMP (UMPK route): step 1/1. Inhibited by UTP. Functionally, catalyzes the reversible phosphorylation of UMP to UDP. This is Uridylate kinase from Baumannia cicadellinicola subsp. Homalodisca coagulata.